Here is an 861-residue protein sequence, read N- to C-terminus: Alpha-actinin A (861 aa).

The actin-binding stretch occupies residues 1 to 239 (MSEEPTPVSG…VMTYVAQYYH (239 aa)). Calponin-homology (CH) domains follow at residues 22-127 (ITQK…LRFA) and 136-242 (LSAK…HHFS). Spectrin repeat units lie at residues 240-365 (HFSA…ALEK), 366-480 (AEQE…TGVK), 481-601 (SSAE…EERK), and 602-714 (VQLA…EQVV). EF-hand domains follow at residues 729-764 (EELS…IGDE) and 765-800 (LTEE…SRKG). Ca(2+) contacts are provided by Asp742, Asp744, Asp746, Lys748, Glu753, Asp778, Asp780, Asn782, Thr784, and Glu789.

It belongs to the alpha-actinin family. In terms of assembly, homodimer; antiparallel.

It localises to the cytoplasm. The protein resides in the cell cortex. Its subcellular location is the contractile vacuole. It is found in the cytoplasmic vesicle. The protein localises to the phagosome. Its function is as follows. F-actin cross-linking protein which is thought to anchor actin to a variety of intracellular structures. This is a bundling protein. Increases the actin-stimulated ATPase activity of myosin. Involved in vegetative cell growth, phagocytosis, motility and development, probably through stabilization of the actin network in the cortical cytoskeleton. This chain is Alpha-actinin A (abpA), found in Dictyostelium discoideum (Social amoeba).